The primary structure comprises 209 residues: Ribulose-phosphate 3-epimerase (209 aa).

Ser8 provides a ligand contact to substrate. Residues His33, Asp35, His64, and Asp170 each coordinate a divalent metal cation. Residue Asp35 is the Proton acceptor of the active site. Substrate contacts are provided by residues His64, 170–172 (DGG), and 191–192 (GS). The Proton donor role is filled by Asp170.

Belongs to the ribulose-phosphate 3-epimerase family. It depends on a divalent metal cation as a cofactor.

It carries out the reaction D-ribulose 5-phosphate = D-xylulose 5-phosphate. Its pathway is carbohydrate degradation. Its function is as follows. Catalyzes the reversible epimerization of D-ribulose 5-phosphate to D-xylulose 5-phosphate. This is Ribulose-phosphate 3-epimerase from Mycoplasma genitalium (strain ATCC 33530 / DSM 19775 / NCTC 10195 / G37) (Mycoplasmoides genitalium).